Consider the following 743-residue polypeptide: 1,4-alpha-glucan branching enzyme GlgB (743 aa).

D423 acts as the Nucleophile in catalysis. E476 (proton donor) is an active-site residue.

It belongs to the glycosyl hydrolase 13 family. GlgB subfamily. Monomer.

It catalyses the reaction Transfers a segment of a (1-&gt;4)-alpha-D-glucan chain to a primary hydroxy group in a similar glucan chain.. The protein operates within glycan biosynthesis; glycogen biosynthesis. In terms of biological role, catalyzes the formation of the alpha-1,6-glucosidic linkages in glycogen by scission of a 1,4-alpha-linked oligosaccharide from growing alpha-1,4-glucan chains and the subsequent attachment of the oligosaccharide to the alpha-1,6 position. This chain is 1,4-alpha-glucan branching enzyme GlgB, found in Pseudomonas fluorescens (strain ATCC BAA-477 / NRRL B-23932 / Pf-5).